The chain runs to 105 residues: Protein SMALL AUXIN UP-REGULATED RNA 16 (105 aa).

Belongs to the ARG7 family. Expressed in etiolated hypocotyls, cotyledons, leaves, flowers and siliques.

Its subcellular location is the cell membrane. Provide a mechanistic link between auxin and plasma membrane H(+)-ATPases (PM H(+)-ATPases, e.g. AHA1 and AHA2), and triggers PM H(+)-ATPases activity by promoting phosphorylation of their C-terminal autoinhibitory domain as a result of PP2C-D subfamily of type 2C phosphatases inhibition, thus leading to the acidification of the apoplast and the facilitation of solutes and water uptake to drive cell expansion. Triggers plant growth probably by promoting cell elongation. Regulates branch angles and bending. The chain is Protein SMALL AUXIN UP-REGULATED RNA 16 from Arabidopsis thaliana (Mouse-ear cress).